Consider the following 360-residue polypeptide: Capsular polysaccharide phosphotransferase LcbA (360 aa).

This sequence belongs to the stealth family.

Part of a group II capsule biosynthesis locus. The chain is Capsular polysaccharide phosphotransferase LcbA (lcbA) from Aeromonas hydrophila.